The chain runs to 359 residues: Peptide chain release factor 1 (359 aa).

An N5-methylglutamine modification is found at Gln236.

This sequence belongs to the prokaryotic/mitochondrial release factor family. Methylated by PrmC. Methylation increases the termination efficiency of RF1.

It is found in the cytoplasm. Its function is as follows. Peptide chain release factor 1 directs the termination of translation in response to the peptide chain termination codons UAG and UAA. The sequence is that of Peptide chain release factor 1 from Lacticaseibacillus casei (strain BL23) (Lactobacillus casei).